A 168-amino-acid polypeptide reads, in one-letter code: Disulfide bond formation protein B 2 (168 aa).

At 1 to 14 (MSAPIGATRAERWT) the chain is on the cytoplasmic side. A helical membrane pass occupies residues 15-31 (LLAIGVASFELVAGALW). Topologically, residues 32 to 49 (IQLAWQEDPCPLCIIQRY) are periplasmic. Cys-41 and Cys-44 are disulfide-bonded. Residues 50–64 (LFLLIALFTFVAAAG) form a helical membrane-spanning segment. The Cytoplasmic portion of the chain corresponds to 65 to 69 (GRRVA). The chain crosses the membrane as a helical span at residues 70–87 (LLRVLSLTTALAGAAVAV). The Periplasmic portion of the chain corresponds to 88–142 (RHIYVQAHPGFSCGFDALQPVIDSLPPAHWLPPVFKVGGLCETLYPPILGLSLPM). Cys-100 and Cys-128 are oxidised to a cystine. A helical transmembrane segment spans residues 143-161 (WALVGFSAIAVALGWRIRA). Residues 162–168 (QAVIRTA) are Cytoplasmic-facing.

The protein belongs to the DsbB family.

The protein localises to the cell inner membrane. Its function is as follows. Required for disulfide bond formation in some periplasmic proteins. Acts by oxidizing the DsbA protein. The chain is Disulfide bond formation protein B 2 from Burkholderia lata (strain ATCC 17760 / DSM 23089 / LMG 22485 / NCIMB 9086 / R18194 / 383).